Here is a 1905-residue protein sequence, read N- to C-terminus: Microtubule cross-linking factor 1 (1905 aa).

The interval 1–249 is necessary for colocalization and binding with microtubules; it reads METLNGPAGG…SSDREPPRGA (249 aa). The disordered stretch occupies residues 1-329; it reads METLNGPAGG…SLGEQSRLVP (329 aa). Residues 1–508 form a necessary for self-assembly, microtubule bundling activity and apicobasal microtubule organization region; the sequence is METLNGPAGG…QDDSADLRCQ (508 aa). The span at 22–40 shows a compositional bias: basic residues; that stretch reads QHHRHHHLHPVAERRRLHR. Composition is skewed to low complexity over residues 63-95 and 115-130; these read VPSS…AAPG and AGAR…LGSR. 2 positions are modified to phosphoserine: S77 and S87. Phosphoserine occurs at positions 217, 221, and 263. A compositionally biased stretch (low complexity) spans 268–283; the sequence is ALLAAPLAAGACPGGR. 3 coiled-coil regions span residues 330–404, 432–483, and 513–718; these read AAEE…EQKS, SVRL…SSLK, and KEEA…LQHE. Disordered regions lie at residues 544 to 563, 601 to 631, 671 to 694, 737 to 800, and 842 to 867; these read YGDV…PSTR, DMRG…LESS, FEPP…GAPL, LRAP…SEPC, and AGLR…GDQQ. S549 bears the Phosphoserine mark. The segment covering 601–616 has biased composition (basic and acidic residues); that stretch reads DMRGQQEREGPGRDHA. Phosphoserine is present on S618. T621 carries the post-translational modification Phosphothreonine. Residues 680–692 show a composition bias toward gly residues; the sequence is LGEGASPGAGGGA. A Phosphoserine modification is found at S685. Residues 741-770 are compositionally biased toward basic and acidic residues; it reads SPRDSDAESDAGKKESDGEESRLPQPKREG. S776 bears the Phosphoserine mark. Residues 857-866 are compositionally biased toward acidic residues; sequence GEEEQGEGDQ. 4 positions are modified to phosphoserine: S901, S923, K941, and T975. Residues 1080-1100 form a disordered region; sequence GVQGGHQADGPDHDSDRGCGF. Coiled coils occupy residues 1143–1201 and 1238–1278; these read KALL…ELGS and EKNW…KENS. The segment at 1265-1382 is necessary for interaction with MARK2 and apicobasal microtubule bundle formation in polarized epithelial cells; it reads EFLWRIEQLQ…EENHKGNLQR (118 aa). S1278 carries the post-translational modification Phosphoserine. The interval 1346–1384 is disordered; the sequence is ALSLDDEPEEPPAHRPEREFRNRLPEEEENHKGNLQRAV. Residues 1356–1377 are compositionally biased toward basic and acidic residues; the sequence is PPAHRPEREFRNRLPEEEENHK. S1385, S1388, and S1399 each carry phosphoserine. Phosphothreonine is present on T1417. At S1421 the chain carries Phosphoserine. Y1427 carries the post-translational modification Phosphotyrosine. Residues 1485–1505 form a disordered region; that stretch reads DTMTSPEHCQKQPLRSHVLTE. S1514, S1523, S1561, S1578, S1583, S1592, and S1661 each carry phosphoserine. Residues 1524–1569 form a disordered region; the sequence is ITAAGGEGPFPTSRARGSPGDTKGGPPEPMLSRWPCTSPRHSRDYV. Disordered regions lie at residues 1655 to 1689, 1707 to 1756, 1782 to 1842, and 1863 to 1905; these read GSGV…SRQV, PKYG…PVHT, GLRA…APPG, and KEER…PWGL. 2 positions are modified to phosphothreonine: T1667 and T1675. A compositionally biased stretch (low complexity) spans 1678–1687; that stretch reads SSPSRSLRSR. The interval 1678–1773 is necessary for colocalization and binding with microtubules; sequence SSPSRSLRSR…SLFNIIDHSP (96 aa). 2 positions are modified to phosphoserine: S1679 and S1683. Over residues 1744–1756 the composition is skewed to polar residues; it reads ARSTTTRESPVHT. S1791, S1808, S1812, and S1814 each carry phosphoserine.

Belongs to the SOGA family. Homodimer. Associates (via N- and C-terminus domains) with microtubule filaments. In terms of assembly, interacts with MARK2; the interaction is direct. In terms of processing, phosphorylated during mitosis in a CDK1-dependent manner.

The protein resides in the lateral cell membrane. It is found in the apical cell membrane. It localises to the cytoplasm. The protein localises to the cytoskeleton. Its subcellular location is the spindle pole. The protein resides in the midbody. Its function is as follows. Microtubule-associated factor involved in the late phase of epithelial polarization and microtubule dynamics regulation. Plays a role in the development and maintenance of non-centrosomal microtubule bundles at the lateral membrane in polarized epithelial cells. Required for faithful chromosome segregation during mitosis. The protein is Microtubule cross-linking factor 1 (MTCL1) of Homo sapiens (Human).